Here is a 74-residue protein sequence, read N- to C-terminus: Anionic peptide clone 9 (74 aa).

The signal sequence occupies residues methionine 1 to alanine 24.

This sequence belongs to the non-disulfide-bridged peptide (NDBP) superfamily. Long chain multifunctional peptide (group 2) family. Expressed by the venom gland.

It localises to the secreted. Functionally, may be an antimicrobial peptide. This chain is Anionic peptide clone 9, found in Tityus costatus (Brazilian scorpion).